The primary structure comprises 354 residues: Lysophosphatidic acid receptor 3 (354 aa).

Residues M1 to V31 lie on the Extracellular side of the membrane. A glycan (N-linked (GlcNAc...) asparagine) is linked at N15. The helical transmembrane segment at I32–I52 threads the bilayer. Over A53–Y67 the chain is Cytoplasmic. Residues L68 to F88 form a helical membrane-spanning segment. Residues N89 to R101 are Extracellular-facing. The helical transmembrane segment at W102 to A124 threads the bilayer. Topologically, residues V125–T146 are cytoplasmic. A helical transmembrane segment spans residues L147–W167. The Extracellular segment spans residues N168–S186. The N-linked (GlcNAc...) asparagine glycan is linked to N172. The chain crosses the membrane as a helical span at residues Y187–V207. Residues R208–T240 lie on the Cytoplasmic side of the membrane. The chain crosses the membrane as a helical span at residues V241–L261. The Extracellular segment spans residues D262–R276. The helical transmembrane segment at W277–Y295 threads the bilayer. Over K296–S354 the chain is Cytoplasmic. C309 carries S-palmitoyl cysteine lipidation.

The protein belongs to the G-protein coupled receptor 1 family.

The protein localises to the cell membrane. In terms of biological role, receptor for lysophosphatidic acid (LPA), a mediator of diverse cellular activities. Seems to be coupled to the G(i)/G(o) and G(q) families of heteromeric G proteins. The polypeptide is Lysophosphatidic acid receptor 3 (Lpar3) (Rattus norvegicus (Rat)).